The primary structure comprises 222 residues: PKHD-type hydroxylase P9301_13621 (222 aa).

Residues 81–175 (KIHGIMFTKS…RLVCVGWIES (95 aa)) form the Fe2OG dioxygenase domain. His-99, Asp-101, and His-156 together coordinate Fe cation. Arg-166 is a binding site for 2-oxoglutarate.

Fe(2+) serves as cofactor. It depends on L-ascorbate as a cofactor.

The protein is PKHD-type hydroxylase P9301_13621 of Prochlorococcus marinus (strain MIT 9301).